The sequence spans 350 residues: Probable DNA polymerase III subunit delta (350 aa).

This sequence belongs to the DNA polymerase HolA subunit family. In terms of assembly, component of the DNA clamp loading complex consisting of tau(3):delta(1):delta'(1). The DNA polymerase III holoenzyme complex contains at least 10 different subunits organized into 3 functionally essential subassemblies: the Pol III core, the beta sliding clamp processivity factor and the clamp-loading complex. The Pol III core (subunits alpha, epsilon and theta) contains the polymerase and the 3'-5' exonuclease proofreading activities. The polymerase is tethered to the template via the dimeric beta sliding clamp processivity factor. The DNA clamp-loading complex assembles the beta sliding clamp onto the primed template and plays a central role in the organization and communication at the replication fork.

The enzyme catalyses DNA(n) + a 2'-deoxyribonucleoside 5'-triphosphate = DNA(n+1) + diphosphate. Part of the beta sliding clamp loading complex, which hydrolyzes ATP to load the beta clamp onto primed DNA to form the DNA replication pre-initiation complex. DNA polymerase III is a complex, multichain enzyme responsible for most of the replicative synthesis in bacteria. This DNA polymerase also exhibits 3'-5' exonuclease activity. The delta subunit is the wrench that will open the beta subunit dimer. The DNA clamp loading complex (tau(3),delta,delta') is thought to load beta dimers onto DNA by binding ATP which alters the complex's conformation so it can bind beta sliding clamp dimers and open them at one interface. Primed DNA is recognized, ATP is hydrolyzed releasing the clamp loading complex and closing the beta sliding clamp ring around the primed DNA. In Aquifex aeolicus (strain VF5), this protein is Probable DNA polymerase III subunit delta.